We begin with the raw amino-acid sequence, 556 residues long: Glucomannan 4-beta-mannosyltransferase 7 (556 aa).

A helical membrane pass occupies residues 58–78 (VVVPVFKFLVLLCLVMSVMFF). The active site involves Asp-158. Asp-217 and Asp-219 together coordinate substrate. Asp-311 is an active-site residue. Helical transmembrane passes span 390 to 410 (IVAH…TVLF), 426 to 448 (LITL…WVLF), 502 to 522 (LLEL…IVYG), and 526 to 546 (LYVY…GFVG).

It belongs to the glycosyltransferase 2 family. Plant cellulose synthase-like A subfamily. As to expression, ubiquitous.

Its subcellular location is the golgi apparatus membrane. The catalysed reaction is GDP-mannose + (glucomannan)n = GDP + (glucomannan)n+1.. Its function is as follows. Probable mannan synthase which consists of a 4-beta-mannosyltransferase activity on mannan using GDP-mannose. The beta-1,4-mannan product is the backbone for galactomannan synthesis by galactomannan galactosyltransferase. Galactomannan is a noncellulosic polysaccharides of plant cell wall. Required for synthesis of a cell wall polysaccharide essential for pollen tube growth, for cell wall structure, or for signaling during plant embryo development. The sequence is that of Glucomannan 4-beta-mannosyltransferase 7 from Arabidopsis thaliana (Mouse-ear cress).